Here is a 119-residue protein sequence, read N- to C-terminus: Ribonuclease P protein component (119 aa).

Belongs to the RnpA family. As to quaternary structure, consists of a catalytic RNA component (M1 or rnpB) and a protein subunit.

It catalyses the reaction Endonucleolytic cleavage of RNA, removing 5'-extranucleotides from tRNA precursor.. In terms of biological role, RNaseP catalyzes the removal of the 5'-leader sequence from pre-tRNA to produce the mature 5'-terminus. It can also cleave other RNA substrates such as 4.5S RNA. The protein component plays an auxiliary but essential role in vivo by binding to the 5'-leader sequence and broadening the substrate specificity of the ribozyme. The protein is Ribonuclease P protein component of Yersinia pseudotuberculosis serotype O:1b (strain IP 31758).